The following is a 186-amino-acid chain: Dual-action ribosomal maturation protein DarP (186 aa).

This sequence belongs to the DarP family.

The protein localises to the cytoplasm. Functionally, member of a network of 50S ribosomal subunit biogenesis factors which assembles along the 30S-50S interface, preventing incorrect 23S rRNA structures from forming. Promotes peptidyl transferase center (PTC) maturation. In Proteus mirabilis (strain HI4320), this protein is Dual-action ribosomal maturation protein DarP.